The sequence spans 480 residues: Glycogen synthase (480 aa).

ADP-alpha-D-glucose is bound at residue K15.

The protein belongs to the glycosyltransferase 1 family. Bacterial/plant glycogen synthase subfamily.

It carries out the reaction [(1-&gt;4)-alpha-D-glucosyl](n) + ADP-alpha-D-glucose = [(1-&gt;4)-alpha-D-glucosyl](n+1) + ADP + H(+). It participates in glycan biosynthesis; glycogen biosynthesis. Its function is as follows. Synthesizes alpha-1,4-glucan chains using ADP-glucose. This is Glycogen synthase from Pasteurella multocida (strain Pm70).